The sequence spans 418 residues: AP-3 complex subunit mu-1 (418 aa).

An MHD domain is found at 176–417 (NNEAYFDVVE…ITKAGKFQVR (242 aa)).

This sequence belongs to the adaptor complexes medium subunit family. In terms of assembly, adaptor protein complex 3 (AP-3) is a heterotetramer composed of two large adaptins (delta-type subunit AP3D1 and beta-type subunit AP3B1 or AP3B2), a medium adaptin (mu-type subunit AP3M1 or AP3M2) and a small adaptin (sigma-type subunit APS1 or AP3S2). Interacts with AGAP1. AP-3 associates with the BLOC-1 complex.

The protein resides in the golgi apparatus. Its subcellular location is the cytoplasmic vesicle membrane. In terms of biological role, part of the AP-3 complex, an adaptor-related complex which is not clathrin-associated. The complex is associated with the Golgi region as well as more peripheral structures. It facilitates the budding of vesicles from the Golgi membrane and may be directly involved in trafficking to lysosomes. In concert with the BLOC-1 complex, AP-3 is required to target cargos into vesicles assembled at cell bodies for delivery into neurites and nerve terminals. In Rattus norvegicus (Rat), this protein is AP-3 complex subunit mu-1 (Ap3m1).